The primary structure comprises 579 residues: Pre-mRNA-processing protein 45 (579 aa).

Disordered stretches follow at residues 1 to 64 (MTSV…GWRP), 218 to 254 (QQDP…LTAE), 343 to 414 (QKAR…TERR), and 521 to 579 (AAEA…VDDD). Positions 234-245 (RGPPSPPPPIMH) are enriched in pro residues. A compositionally biased stretch (basic and acidic residues) spans 343–359 (QKAREERAASNRRDSRA). A compositionally biased stretch (low complexity) spans 366-379 (ASRSPSAYSRSATP). Composition is skewed to basic and acidic residues over residues 386-414 (ARER…TERR), 521-538 (AAEA…KDTT), and 563-579 (EVER…VDDD).

Belongs to the SNW family. Associated with the spliceosome.

The protein resides in the nucleus. In terms of biological role, involved in pre-mRNA splicing. The polypeptide is Pre-mRNA-processing protein 45 (prp45) (Aspergillus fumigatus (strain ATCC MYA-4609 / CBS 101355 / FGSC A1100 / Af293) (Neosartorya fumigata)).